The sequence spans 217 residues: Large ribosomal subunit protein bL25 (217 aa).

Belongs to the bacterial ribosomal protein bL25 family. CTC subfamily. Part of the 50S ribosomal subunit; part of the 5S rRNA/L5/L18/L25 subcomplex. Contacts the 5S rRNA. Binds to the 5S rRNA independently of L5 and L18.

This is one of the proteins that binds to the 5S RNA in the ribosome where it forms part of the central protuberance. The chain is Large ribosomal subunit protein bL25 from Methylobacterium sp. (strain 4-46).